Reading from the N-terminus, the 468-residue chain is Chromosomal replication initiator protein DnaA (468 aa).

The interval 1 to 84 is domain I, interacts with DnaA modulators; the sequence is MSSSLWLQCM…RFEVGSRPVA (84 aa). Residues 81–113 are disordered; that stretch reads RPVAAPKPAPTRTPADVAAESSAPAQLQARKPV. Positions 84 to 131 are domain II; that stretch reads AAPKPAPTRTPADVAAESSAPAQLQARKPVHKTWDDDAQAIADINHRS. Positions 132–348 are domain III, AAA+ region; that stretch reads NVNPKHKFNN…GALNRVIANA (217 aa). Residues Gly-176, Gly-178, Lys-179, and Thr-180 each contribute to the ATP site. The tract at residues 349-468 is domain IV, binds dsDNA; it reads NFTGRPITID…YSNLIRTLSS (120 aa).

Belongs to the DnaA family. As to quaternary structure, oligomerizes as a right-handed, spiral filament on DNA at oriC.

The protein resides in the cytoplasm. Its function is as follows. Plays an essential role in the initiation and regulation of chromosomal replication. ATP-DnaA binds to the origin of replication (oriC) to initiate formation of the DNA replication initiation complex once per cell cycle. Binds the DnaA box (a 9 base pair repeat at the origin) and separates the double-stranded (ds)DNA. Forms a right-handed helical filament on oriC DNA; dsDNA binds to the exterior of the filament while single-stranded (ss)DNA is stabiized in the filament's interior. The ATP-DnaA-oriC complex binds and stabilizes one strand of the AT-rich DNA unwinding element (DUE), permitting loading of DNA polymerase. After initiation quickly degrades to an ADP-DnaA complex that is not apt for DNA replication. Binds acidic phospholipids. The chain is Chromosomal replication initiator protein DnaA from Vibrio vulnificus (strain CMCP6).